The sequence spans 585 residues: Arginine--tRNA ligase (585 aa).

Positions 131–141 (ANPTGPMHVGH) match the 'HIGH' region motif.

This sequence belongs to the class-I aminoacyl-tRNA synthetase family. In terms of assembly, monomer.

Its subcellular location is the cytoplasm. The enzyme catalyses tRNA(Arg) + L-arginine + ATP = L-arginyl-tRNA(Arg) + AMP + diphosphate. The chain is Arginine--tRNA ligase from Brucella abortus (strain S19).